A 364-amino-acid chain; its full sequence is Melatonin receptor type 1B (364 aa).

An N-terminal signal peptide occupies residues 1-28 (MPDNSSIANCCAASGLAARPSWPGSAEA). Residues 29–45 (EPPETPRAPWVAPMLST) lie on the Extracellular side of the membrane. Residues 46–66 (VVIVTTAVDFVGNLLVILSVL) traverse the membrane as a helical segment. The Cytoplasmic portion of the chain corresponds to 67–81 (RNRKLRNAGNLFVVN). Residues 82–102 (LALADLVVALYPYPLILVAIL) form a helical membrane-spanning segment. Over 103 to 115 (HDGWVLGEIHCKA) the chain is Extracellular. The cysteines at positions 113 and 190 are disulfide-linked. Residues 116-136 (SAFVMGLSVIGSVFNITAIAI) form a helical membrane-spanning segment. Residues 137-158 (NRYWCICHSATYHRACSQWHAP) are Cytoplasmic-facing. The chain crosses the membrane as a helical span at residues 159–179 (LYISLIWLLTLVALVPNFFVG). Residues 180-200 (SLEYDPRIYSCTFIQTASTQY) are Extracellular-facing. A helical membrane pass occupies residues 201–221 (TMAVVAIHFLLPIAVVSFCYL). The Cytoplasmic segment spans residues 222–255 (RIWILVLQARRKAKAERKLRLRPSDLRSFLTMFA). The chain crosses the membrane as a helical span at residues 256-276 (VFVVFAICWAPLNCIGLAVAI). Over 277 to 287 (NPEAMALQIPE) the chain is Extracellular. The helical transmembrane segment at 288-308 (GLFVTSYFLAYFNSCLNAIVY) threads the bilayer. Residues 309 to 364 (GLLNQNFRREYKRILSALWSTGRCFHDASKCHLTEDLQGPVPPAAMATIPVQEGAL) lie on the Cytoplasmic side of the membrane.

Belongs to the G-protein coupled receptor 1 family. Expressed in the hippocampus, kidney, and ovary.

The protein resides in the cell membrane. In terms of biological role, high affinity receptor for melatonin. The activity of this receptor is mediated by pertussis toxin sensitive G proteins that inhibits adenylate cyclase activity. This is Melatonin receptor type 1B from Rattus norvegicus (Rat).